The primary structure comprises 393 residues: Cyclic GMP-AMP synthase-like receptor 1 (393 aa).

3 residues coordinate Mg(2+): Glu-89, Asp-91, and Asp-205. Position 89–91 (89–91 (EFD)) interacts with ATP. GTP is bound by residues Asp-205 and 251-258 (RASFYEAE). ATP contacts are provided by residues 255 to 258 (YEAE), Lys-276, and 289 to 293 (SYHIK).

It belongs to the mab-21 family. Mg(2+) is required as a cofactor. Requires Mn(2+) as cofactor.

The catalysed reaction is GTP + ATP = 3',2'-cGAMP + 2 diphosphate. The enzyme catalyses GTP + ATP = pppA(2'-5')pG + diphosphate. It catalyses the reaction pppA(2'-5')pG = 3',2'-cGAMP + diphosphate. The enzyme activity is specifically activated by double-stranded RNA (dsRNA). Recognizes long dsRNA (&gt;30 bp) with no preference for 5' RNA phosphorylation. Nucleotidyltransferase that catalyzes the formation of cyclic GMP-AMP (3',2'-cGAMP) from ATP and GTP and plays a key role in innate immunity. Synthesizes 3',2'-cGAMP in a two-step reaction through production of the linear intermediate pppA(2'-5')pG. Acts as a key sensor of double-stranded RNA (dsRNA), the presence of dsRNA in the cytoplasm being a danger signal that triggers the immune responses. Directly binds dsRNA longer than 35 bp, activating the nucleotidyltransferase activity, leading to synthesis of 3',2'-cGAMP, a second messenger that binds to and activates Sting, thereby triggering the antiviral immune response via activation of the NF-kappa-B transcription factor Rel (Relish). In Drosophila simulans (Fruit fly), this protein is Cyclic GMP-AMP synthase-like receptor 1.